Consider the following 238-residue polypeptide: LRRN4 C-terminal-like protein (238 aa).

The first 22 residues, 1-22 (MLGSPCLLWLLAVTFLVPRAQP), serve as a signal peptide directing secretion. Residues 23–194 (LAPQDFEEEE…RLAVPPNPRT (172 aa)) are Extracellular-facing. The Fibronectin type-III domain occupies 82–176 (PPDPPRMGEV…AGGEGLEGAD (95 aa)). N132 is a glycosylation site (N-linked (GlcNAc...) asparagine). The helical transmembrane segment at 195 to 215 (LVHAAVGVGTALALLSCAALV) threads the bilayer. Topologically, residues 216–238 (WHFCLRDRWGCPRRAAARAAGAL) are cytoplasmic.

The protein resides in the membrane. This is LRRN4 C-terminal-like protein (LRRN4CL) from Homo sapiens (Human).